Reading from the N-terminus, the 158-residue chain is UPF0225 protein Pfl01_1218 (158 aa).

Belongs to the UPF0225 family.

The polypeptide is UPF0225 protein Pfl01_1218 (Pseudomonas fluorescens (strain Pf0-1)).